A 109-amino-acid polypeptide reads, in one-letter code: Defensin-B5 (109 aa).

An N-terminal signal peptide occupies residues 1–20 (MRGLLPFLFLLSFFLSPIQA). The interval 21–44 (QPEGREEELEETWSEDRDQAPPRV) is disordered. A propeptide spanning residues 21 to 70 (QPEGREEELEETWSEDRDQAPPRVVEESEVVGAENEAGLAAGRSYPWIIL) is cleaved from the precursor. A compositionally biased stretch (basic and acidic residues) spans 34-44 (SEDRDQAPPRV). 3 cysteine pairs are disulfide-bonded: Cys-73/Cys-101, Cys-80/Cys-95, and Cys-85/Cys-102. Residues 107 to 109 (AVP) constitute a propeptide that is removed on maturation.

The protein belongs to the beta-defensin family. In terms of tissue distribution, highly expressed in kidney, and expressed at lower levels in testis.

It localises to the secreted. Its function is as follows. Has antimicrobial activity. The protein is Defensin-B5 of Ornithorhynchus anatinus (Duckbill platypus).